Consider the following 265-residue polypeptide: Nitrogenase vanadium-iron protein alpha chain (265 aa).

Positions 17 and 80 each coordinate [8Fe-7S] cluster. Cysteine 199 provides a ligand contact to [7Fe-V-9S-C-homocitryl] cluster.

The protein belongs to the NifD/NifK/NifE/NifN family. In terms of assembly, hexamer of two alpha, two beta, and two delta chains. [8Fe-7S] cluster serves as cofactor. The cofactor is [7Fe-V-9S-C-homocitryl] cluster.

The catalysed reaction is N2 + 8 reduced [2Fe-2S]-[ferredoxin] + 16 ATP + 16 H2O = H2 + 8 oxidized [2Fe-2S]-[ferredoxin] + 2 NH4(+) + 16 ADP + 16 phosphate + 6 H(+). In terms of biological role, this vanadium-iron protein is part of the nitrogenase complex that catalyzes the key enzymatic reactions in nitrogen fixation. The protein is Nitrogenase vanadium-iron protein alpha chain (vnfD) of Azorhizophilus paspali (Azotobacter paspali).